We begin with the raw amino-acid sequence, 350 residues long: tRNA uridine(34) hydroxylase (350 aa).

Positions 146-240 (DDPDAVFIDM…YARRAREQGL (95 aa)) constitute a Rhodanese domain. Residue Cys-200 is the Cysteine persulfide intermediate of the active site. The segment covering 319 to 328 (RRRRAGRENG) has biased composition (basic and acidic residues). Residues 319–350 (RRRRAGRENGNKIFNKSRGRLNSKLSIPDPAE) are disordered.

Belongs to the TrhO family.

The enzyme catalyses uridine(34) in tRNA + AH2 + O2 = 5-hydroxyuridine(34) in tRNA + A + H2O. Catalyzes oxygen-dependent 5-hydroxyuridine (ho5U) modification at position 34 in tRNAs. This Salmonella choleraesuis (strain SC-B67) protein is tRNA uridine(34) hydroxylase.